Reading from the N-terminus, the 152-residue chain is MIKVVRAKLHGITVTGADLNYHGSITLDPEICAQAGIYPMEFVEIWNRNSGARISTYVIFGEPGSGCCILNGAAARTCQRGDVIIIAASEYTTPDRLYTLKPRILTFTAGNRVDRVLRYDVFKGPDRAFDFRTLDITAGEDAAALEPVPILD.

Residue Ser-24 is the Schiff-base intermediate with substrate; via pyruvic acid of the active site. Residue Ser-24 is modified to Pyruvic acid (Ser). Residue Thr-56 coordinates substrate. The active-site Proton donor is Tyr-57. Gly-72–Ala-74 lines the substrate pocket.

Belongs to the PanD family. In terms of assembly, heterooctamer of four alpha and four beta subunits. The cofactor is pyruvate. In terms of processing, is synthesized initially as an inactive proenzyme, which is activated by self-cleavage at a specific serine bond to produce a beta-subunit with a hydroxyl group at its C-terminus and an alpha-subunit with a pyruvoyl group at its N-terminus.

It is found in the cytoplasm. It carries out the reaction L-aspartate + H(+) = beta-alanine + CO2. It participates in cofactor biosynthesis; (R)-pantothenate biosynthesis; beta-alanine from L-aspartate: step 1/1. Functionally, catalyzes the pyruvoyl-dependent decarboxylation of aspartate to produce beta-alanine. This Rhodospirillum centenum (strain ATCC 51521 / SW) protein is Aspartate 1-decarboxylase.